The sequence spans 77 residues: Small ribosomal subunit protein bS20 (77 aa).

Belongs to the bacterial ribosomal protein bS20 family.

In terms of biological role, binds directly to 16S ribosomal RNA. The protein is Small ribosomal subunit protein bS20 of Streptococcus uberis (strain ATCC BAA-854 / 0140J).